The chain runs to 274 residues: Large ribosomal subunit protein uL2 (274 aa).

The disordered stretch occupies residues 222 to 274 (GVAMNPVDHPHGGGEGRGKGHHPQSPWGQLAKGYKTRRGKKASDKLIVRRRNG). A compositionally biased stretch (basic and acidic residues) spans 229–239 (DHPHGGGEGRG).

Belongs to the universal ribosomal protein uL2 family. In terms of assembly, part of the 50S ribosomal subunit. Forms a bridge to the 30S subunit in the 70S ribosome.

In terms of biological role, one of the primary rRNA binding proteins. Required for association of the 30S and 50S subunits to form the 70S ribosome, for tRNA binding and peptide bond formation. It has been suggested to have peptidyltransferase activity; this is somewhat controversial. Makes several contacts with the 16S rRNA in the 70S ribosome. The sequence is that of Large ribosomal subunit protein uL2 from Thermosipho melanesiensis (strain DSM 12029 / CIP 104789 / BI429).